The chain runs to 203 residues: Small ribosomal subunit protein uS7B (203 aa).

It belongs to the universal ribosomal protein uS7 family. Component of the small ribosomal subunit (SSU). Mature yeast ribosomes consist of a small (40S) and a large (60S) subunit. The 40S small subunit contains 1 molecule of ribosomal RNA (18S rRNA) and at least 33 different proteins. The large 60S subunit contains 3 rRNA molecules (25S, 5.8S and 5S rRNA) and at least 46 different proteins.

Its subcellular location is the cytoplasm. Component of the ribosome, a large ribonucleoprotein complex responsible for the synthesis of proteins in the cell. The small ribosomal subunit (SSU) binds messenger RNAs (mRNAs) and translates the encoded message by selecting cognate aminoacyl-transfer RNA (tRNA) molecules. The large subunit (LSU) contains the ribosomal catalytic site termed the peptidyl transferase center (PTC), which catalyzes the formation of peptide bonds, thereby polymerizing the amino acids delivered by tRNAs into a polypeptide chain. The nascent polypeptides leave the ribosome through a tunnel in the LSU and interact with protein factors that function in enzymatic processing, targeting, and the membrane insertion of nascent chains at the exit of the ribosomal tunnel. The protein is Small ribosomal subunit protein uS7B (rps502) of Schizosaccharomyces pombe (strain 972 / ATCC 24843) (Fission yeast).